The following is a 139-amino-acid chain: Small ribosomal subunit protein uS12m (139 aa).

The tract at residues 1–21 is disordered; the sequence is MLSTLYQNDLKKKRNRRRNRS. Residues 11 to 20 show a composition bias toward basic residues; that stretch reads KKKRNRRRNR.

The protein belongs to the universal ribosomal protein uS12 family.

It is found in the mitochondrion. Its function is as follows. Protein S12 is involved in the translation initiation step. The polypeptide is Small ribosomal subunit protein uS12m (RPS12) (Paramecium tetraurelia).